Reading from the N-terminus, the 202-residue chain is dITP/XTP pyrophosphatase (202 aa).

7–12 (TTNEGK) contacts substrate. The Mg(2+) site is built by Glu37 and Asp66. Asp66 functions as the Proton acceptor in the catalytic mechanism. Substrate contacts are provided by residues Ser67, 155–158 (FGYD), Lys178, and 183–184 (HR).

The protein belongs to the HAM1 NTPase family. Homodimer. Requires Mg(2+) as cofactor.

The catalysed reaction is XTP + H2O = XMP + diphosphate + H(+). It carries out the reaction dITP + H2O = dIMP + diphosphate + H(+). The enzyme catalyses ITP + H2O = IMP + diphosphate + H(+). Pyrophosphatase that catalyzes the hydrolysis of nucleoside triphosphates to their monophosphate derivatives, with a high preference for the non-canonical purine nucleotides XTP (xanthosine triphosphate), dITP (deoxyinosine triphosphate) and ITP. Seems to function as a house-cleaning enzyme that removes non-canonical purine nucleotides from the nucleotide pool, thus preventing their incorporation into DNA/RNA and avoiding chromosomal lesions. This is dITP/XTP pyrophosphatase from Aquifex aeolicus (strain VF5).